The following is a 312-amino-acid chain: MNAALRKWHRAVTLLPALSVYDETAQRVFTAAYDRRHKSFEDWLTAIAQLPLIEPRAVHLNQAVVTAEGAGDEIAIETLLKALMPWRKGPFSLCGVSLDCEWRSDFKYQRLLDAGFSVSGKKVLDVGTGNGYFLYRFLGSGAQCAVGVDPSWLYFAQFLALQKFFQQNRAVYLPTTLDDLSLEGFDCVLAMGVLYHRRDPLAFLAQLRNAVVCGGDLVIETLVVDGDAQTVYMPKQEYVGMHNVWFLPSIAALCRWLERLNFRIELCSEAVETTINEQRRTRWVNSFSLADFLQRAPSAPPPKRAFVIAKRL.

Carboxy-S-adenosyl-L-methionine-binding positions include K88, W102, K107, G127, 149-151 (DPS), 177-178 (LD), M191, Y195, and R304.

This sequence belongs to the class I-like SAM-binding methyltransferase superfamily. CmoB family. Homotetramer.

The catalysed reaction is carboxy-S-adenosyl-L-methionine + 5-hydroxyuridine(34) in tRNA = 5-carboxymethoxyuridine(34) in tRNA + S-adenosyl-L-homocysteine + H(+). Functionally, catalyzes carboxymethyl transfer from carboxy-S-adenosyl-L-methionine (Cx-SAM) to 5-hydroxyuridine (ho5U) to form 5-carboxymethoxyuridine (cmo5U) at position 34 in tRNAs. This Dichelobacter nodosus (strain VCS1703A) protein is tRNA U34 carboxymethyltransferase.